Here is a 477-residue protein sequence, read N- to C-terminus: Membrane-bound lytic murein transglycosylase F (477 aa).

The N-terminal stretch at M1 to V22 is a signal peptide. A non-LT domain region spans residues D23–V257. An LT domain region spans residues K258–K477. Residue E302 is part of the active site. Positions S446–K477 are disordered. The span at P451–A460 shows a compositional bias: acidic residues.

It in the N-terminal section; belongs to the bacterial solute-binding protein 3 family. This sequence in the C-terminal section; belongs to the transglycosylase Slt family.

It is found in the cell outer membrane. It carries out the reaction Exolytic cleavage of the (1-&gt;4)-beta-glycosidic linkage between N-acetylmuramic acid (MurNAc) and N-acetylglucosamine (GlcNAc) residues in peptidoglycan, from either the reducing or the non-reducing ends of the peptidoglycan chains, with concomitant formation of a 1,6-anhydrobond in the MurNAc residue.. Functionally, murein-degrading enzyme that degrades murein glycan strands and insoluble, high-molecular weight murein sacculi, with the concomitant formation of a 1,6-anhydromuramoyl product. Lytic transglycosylases (LTs) play an integral role in the metabolism of the peptidoglycan (PG) sacculus. Their lytic action creates space within the PG sacculus to allow for its expansion as well as for the insertion of various structures such as secretion systems and flagella. The chain is Membrane-bound lytic murein transglycosylase F from Shewanella sp. (strain W3-18-1).